A 66-amino-acid chain; its full sequence is Large ribosomal subunit protein bL35 (66 aa).

The span at 1-16 (MPKQKTHRASAKRFKR) shows a compositional bias: basic residues. Positions 1-21 (MPKQKTHRASAKRFKRTGSGG) are disordered.

This sequence belongs to the bacterial ribosomal protein bL35 family.

The chain is Large ribosomal subunit protein bL35 from Streptococcus gordonii (strain Challis / ATCC 35105 / BCRC 15272 / CH1 / DL1 / V288).